Reading from the N-terminus, the 477-residue chain is PTS system MurNAc-GlcNAc-specific EIIBC component (477 aa).

The PTS EIIB type-1 domain maps to 5 to 87; the sequence is QQLAHHILDA…VKLSGVQLGE (83 aa). C27 functions as the Phosphocysteine intermediate; for EIIB activity in the catalytic mechanism. Residues 91-113 form a disordered region; that stretch reads HRSNTSNIKNQAQQNKREFQQKR. A compositionally biased stretch (polar residues) spans 92 to 104; it reads RSNTSNIKNQAQQ. In terms of domain architecture, PTS EIIC type-1 spans 123–477; that stretch reads KSIANIFIPL…EMRNLNKLGD (355 aa). A run of 10 helical transmembrane segments spans residues 128-148, 167-187, 192-212, 227-247, 267-287, 298-318, 342-362, 377-397, 401-421, and 443-463; these read IFIPLIPAFIGAGLIGGIAAV, VAVLNVIKDGMLAYLAIFTGF, VFGATPGLGGVIGGTTLLTGI, LIAGQGGIIGVILAVWLLSII, ISLLIIGLLTIFFFMPIAGFI, VIGVGGIFSGFIIGAFFLPLV, LLPIAAMAGAGQVGAALALWV, ALPVGFLGIGEPLIYGVTLPL, FITACLGGGIGGAVIGGIGHI, and LGYIIGLLSAYLAGFIFTYFF.

Its subcellular location is the cell membrane. The enzyme catalyses N-acetyl-beta-D-muramate-(1-&gt;4)-N-acetyl-D-glucosamine(out) + N(pros)-phospho-L-histidyl-[protein] = 6-phospho-N-acetyl-beta-D-muramate-(1-&gt;4)-N-acetyl-D-glucosamine(in) + L-histidyl-[protein]. It participates in cell wall biogenesis; peptidoglycan recycling. Its function is as follows. The phosphoenolpyruvate-dependent sugar phosphotransferase system (sugar PTS), a major carbohydrate active transport system, catalyzes the phosphorylation of incoming sugar substrates concomitantly with their translocation across the cell membrane. This system is involved in the uptake and phosphorylation of MurNAc-GlcNAc, the principle peptidoglycan turnover product of S.aureus, yielding cytoplasmic MurNAc 6P-GlcNAc. This chain is PTS system MurNAc-GlcNAc-specific EIIBC component, found in Staphylococcus haemolyticus (strain JCSC1435).